We begin with the raw amino-acid sequence, 431 residues long: 23S rRNA (uracil(1939)-C(5))-methyltransferase RlmD (431 aa).

The region spanning 8–68 (KRRVTTRQII…SKYSRGQVKR (61 aa)) is the TRAM domain. Positions 81, 87, 90, and 162 each coordinate [4Fe-4S] cluster. Positions 265, 294, 299, 315, 342, and 363 each coordinate S-adenosyl-L-methionine. The active-site Nucleophile is C389.

The protein belongs to the class I-like SAM-binding methyltransferase superfamily. RNA M5U methyltransferase family. RlmD subfamily.

The catalysed reaction is uridine(1939) in 23S rRNA + S-adenosyl-L-methionine = 5-methyluridine(1939) in 23S rRNA + S-adenosyl-L-homocysteine + H(+). In terms of biological role, catalyzes the formation of 5-methyl-uridine at position 1939 (m5U1939) in 23S rRNA. In Enterobacter sp. (strain 638), this protein is 23S rRNA (uracil(1939)-C(5))-methyltransferase RlmD.